The sequence spans 209 residues: Molybdenum cofactor guanylyltransferase (209 aa).

GTP is bound by residues 16-18 (LAG), K28, N56, D69, and D103. D103 contacts Mg(2+).

This sequence belongs to the MobA family. Monomer. Mg(2+) serves as cofactor.

It localises to the cytoplasm. The catalysed reaction is Mo-molybdopterin + GTP + H(+) = Mo-molybdopterin guanine dinucleotide + diphosphate. Transfers a GMP moiety from GTP to Mo-molybdopterin (Mo-MPT) cofactor (Moco or molybdenum cofactor) to form Mo-molybdopterin guanine dinucleotide (Mo-MGD) cofactor. The sequence is that of Molybdenum cofactor guanylyltransferase from Rhizobium leguminosarum bv. trifolii (strain WSM2304).